The sequence spans 100 residues: Tachykinin-4 (100 aa).

Positions 1 to 19 (MPSSVTLLLLMGLSVCTSA) are cleaved as a signal peptide. 2 propeptides span residues 20–55 (EDGG…LQEV) and 85–100 (RASS…QGAE). The interval 80-100 (GLLGRRASSTKGSVDEDQGAE) is disordered.

The protein belongs to the tachykinin family.

Its subcellular location is the secreted. Functionally, tachykinins are active peptides which excite neurons, evoke behavioral responses, are potent vasodilators and secretagogues, and contract (directly or indirectly) many smooth muscles. The sequence is that of Tachykinin-4 from Oryctolagus cuniculus (Rabbit).